A 216-amino-acid chain; its full sequence is Glycerol-3-phosphate acyltransferase (216 aa).

The next 5 membrane-spanning stretches (helical) occupy residues 4 to 24 (TIIGLILAYLLGSIPTGLWIG), 71 to 91 (LPFFLHIEGVSPLVFGLLAVI), 113 to 133 (VVLGFSPAFFVYLIVIFASIL), 144 to 164 (VLSAVIAILSALLFPLVGFIL), and 165 to 185 (PSYDLFFTLIIIALALIIILR).

The protein belongs to the PlsY family. As to quaternary structure, probably interacts with PlsX.

It localises to the cell membrane. It carries out the reaction an acyl phosphate + sn-glycerol 3-phosphate = a 1-acyl-sn-glycero-3-phosphate + phosphate. It functions in the pathway lipid metabolism; phospholipid metabolism. Catalyzes the transfer of an acyl group from acyl-phosphate (acyl-PO(4)) to glycerol-3-phosphate (G3P) to form lysophosphatidic acid (LPA). This enzyme utilizes acyl-phosphate as fatty acyl donor, but not acyl-CoA or acyl-ACP. The chain is Glycerol-3-phosphate acyltransferase from Streptococcus sanguinis (strain SK36).